The chain runs to 174 residues: Cell division protein FtsL (174 aa).

The Cytoplasmic portion of the chain corresponds to 1-38; that stretch reads MLAAPRELSYIPQPVVSSKQSPRSGLSNRRRESRARQK. A helical transmembrane segment spans residues 39–59; that stretch reads ILLLGLVLMGFVIGLSLTFLT. Residues 60 to 174 lie on the Extracellular side of the membrane; sequence MQVLIKGYKI…EPARQAGAGV (115 aa).

This sequence belongs to the FtsL family.

It localises to the cell membrane. Its function is as follows. Essential cell division protein. The polypeptide is Cell division protein FtsL (Moorella thermoacetica (strain ATCC 39073 / JCM 9320)).